Consider the following 497-residue polypeptide: Low affinity K(+) transporter 1 (497 aa).

Over 1–29 (MFNHDWKYSINSKTFADLNIELFRNHKFK) the chain is Extracellular. The chain crosses the membrane as a helical span at residues 30-50 (TVLNYIIGVVGWNGLKLALFV). At 51-80 (SDIYTCIKLLAFNSWSNNIIKPYLPFKISK) the chain is on the cytoplasmic side. A helical membrane pass occupies residues 81–101 (WLFSGCILASIVLLIWEAIAG). The Extracellular portion of the chain corresponds to 102–216 (MRIYKTGNIS…TNHEEAVILS (115 aa)). A helical transmembrane segment spans residues 217 to 237 (LMLFSFIIWALFVFKFLLAVI). The Cytoplasmic portion of the chain corresponds to 238–497 (CSIFVYYKII…EDEDRTYNYT (260 aa)). Phosphoserine occurs at positions 291 and 319. Positions 420–469 (EFHGPLDSMPNTTNNIRNFNSNSSRPRPPPLQTKSSINSKADSNDNGRIY) are disordered. The segment covering 429–444 (PNTTNNIRNFNSNSSR) has biased composition (low complexity). Over residues 451-465 (QTKSSINSKADSNDN) the composition is skewed to polar residues.

It belongs to the KCH1 low affinity K(+) transporter family.

It is found in the vacuole membrane. Its subcellular location is the cell membrane. The enzyme catalyses K(+)(in) = K(+)(out). Low affinity potassium transporter that, with PRM6/KCH2, participates in high-affinity Ca(2+) influx system (HACS) activation during the response to mating pheromone. Directly promotes K(+) influx and HACS may electrochemically respond to this K(+) influx. KCH1 and KCH2 act at the apex of the calcium signaling pathway that is used for survival during prolonged exposures to mating pheromones. The sequence is that of Low affinity K(+) transporter 1 from Saccharomyces cerevisiae (strain ATCC 204508 / S288c) (Baker's yeast).